A 566-amino-acid polypeptide reads, in one-letter code: Oxygen-dependent choline dehydrogenase (566 aa).

Residue 7 to 36 coordinates FAD; sequence DYIICGAGSAGNVLATRLTEDPDVTVLLLE. The segment at 180–202 is disordered; sequence NGYQQEGFGPMDRTVTPKGRRAS. His-474 acts as the Proton acceptor in catalysis.

Belongs to the GMC oxidoreductase family. FAD serves as cofactor.

The catalysed reaction is choline + A = betaine aldehyde + AH2. It carries out the reaction betaine aldehyde + NAD(+) + H2O = glycine betaine + NADH + 2 H(+). Its pathway is amine and polyamine biosynthesis; betaine biosynthesis via choline pathway; betaine aldehyde from choline (cytochrome c reductase route): step 1/1. Functionally, involved in the biosynthesis of the osmoprotectant glycine betaine. Catalyzes the oxidation of choline to betaine aldehyde and betaine aldehyde to glycine betaine at the same rate. The polypeptide is Oxygen-dependent choline dehydrogenase (Burkholderia cenocepacia (strain HI2424)).